The primary structure comprises 83 residues: Weak toxin DE-1 (83 aa).

An N-terminal signal peptide occupies residues 1-21; that stretch reads MKTLLLTLVVVTIVCLDLGYS. 4 disulfide bridges follow: Cys24–Cys45, Cys38–Cys62, Cys64–Cys75, and Cys76–Cys81.

Belongs to the three-finger toxin family. Short-chain subfamily. Type I alpha-neurotoxin sub-subfamily. In terms of tissue distribution, expressed by the venom gland.

The protein resides in the secreted. The chain is Weak toxin DE-1 from Ophiophagus hannah (King cobra).